The sequence spans 83 residues: Small ribosomal subunit protein bS16 (83 aa).

The protein belongs to the bacterial ribosomal protein bS16 family.

The polypeptide is Small ribosomal subunit protein bS16 (Borrelia hermsii (strain HS1 / DAH)).